The primary structure comprises 434 residues: MSNAPEIVQRLIKMIMRAFYETRHIIFMDAILRHSALTDEQTALLMGIPIKECRFIAGKLREDRLLAIQSRTEMKEGQQRQYHTTYFYIDFCSTIDSIKWRMHQLVKTVEDRMRNDFDSKGYVCPFCNKKFSSLDVLSLVTNEGTFACNVCGTELKDDEESAEMMSSQKRLGKLMGQVNGIIDALKRVDEIVVPQNNFQSALEHAVPVSLDTQNLSQQNLSKSNSDVRLSTSSPSITVDFSADKETDEKRERNCDKQVKAAQNILPEWHATSTISGSITRAGAKDAALHSFRTETVNEVQDTKTDITSEKSALDAYYATLRAKQKEESEFMDSENVDDEEDDDFLDVTTATSLQNKSTDYGSVKRKTENLNSDSDIQNKRTKSIEENNSLPPIVSTNGITDGDTEMQESKKNVIINGFNEDDEDDEDEADFEDV.

The HTH TFE/IIEalpha-type domain maps to 8-99; the sequence is VQRLIKMIMR…DFCSTIDSIK (92 aa). The C4-type zinc-finger motif lies at 124–151; that stretch reads CPFCNKKFSSLDVLSLVTNEGTFACNVC. Disordered regions lie at residues 217 to 251, 357 to 408, and 415 to 434; these read QQNL…EKRE, STDY…EMQE, and INGF…FEDV. Residues 226 to 238 show a composition bias toward polar residues; it reads DVRLSTSSPSITV. Basic and acidic residues-rich tracts occupy residues 241–251 and 376–385; these read SADKETDEKRE and IQNKRTKSIE. The span at 386–399 shows a compositional bias: polar residues; that stretch reads ENNSLPPIVSTNGI. Residues 419-434 show a composition bias toward acidic residues; sequence NEDDEDDEDEADFEDV.

It belongs to the TFIIE alpha subunit family. TFIIE is a tetramer of two alpha (tfa1) and two beta (tfa2) subunits.

It is found in the nucleus. Functionally, recruits TFIIH to the initiation complex and stimulates the RNA polymerase II C-terminal domain kinase and DNA-dependent ATPase activities of TFIIH. Both TFIIH and TFIIE are required for promoter clearance by RNA polymerase. The chain is Transcription initiation factor IIE subunit alpha (tfa1) from Schizosaccharomyces pombe (strain 972 / ATCC 24843) (Fission yeast).